We begin with the raw amino-acid sequence, 299 residues long: tRNA dimethylallyltransferase (299 aa).

13-20 lines the ATP pocket; it reads GPTASGKT. Substrate is bound at residue 15–20; sequence TASGKT. The interaction with substrate tRNA stretch occupies residues 38–41; it reads DSRQ.

It belongs to the IPP transferase family. In terms of assembly, monomer. The cofactor is Mg(2+).

The enzyme catalyses adenosine(37) in tRNA + dimethylallyl diphosphate = N(6)-dimethylallyladenosine(37) in tRNA + diphosphate. Functionally, catalyzes the transfer of a dimethylallyl group onto the adenine at position 37 in tRNAs that read codons beginning with uridine, leading to the formation of N6-(dimethylallyl)adenosine (i(6)A). This is tRNA dimethylallyltransferase from Prochlorococcus marinus (strain MIT 9313).